Consider the following 359-residue polypeptide: Peptide chain release factor 1 (359 aa).

Position 234 is an N5-methylglutamine (glutamine 234). The segment at 283–305 (SQKDAARAADRRAQVGSGDRSER) is disordered.

It belongs to the prokaryotic/mitochondrial release factor family. Methylated by PrmC. Methylation increases the termination efficiency of RF1.

The protein localises to the cytoplasm. Peptide chain release factor 1 directs the termination of translation in response to the peptide chain termination codons UAG and UAA. The polypeptide is Peptide chain release factor 1 (Methylobacterium sp. (strain 4-46)).